The sequence spans 36 residues: Potassium channel toxin alpha-KTx 11.3 (36 aa).

Disulfide bonds link Cys8–Cys27, Cys13–Cys33, and Cys17–Cys35.

This sequence belongs to the short scorpion toxin superfamily. Potassium channel inhibitor family. Alpha-KTx 11 subfamily. Expressed by the venom gland.

Its subcellular location is the secreted. Its function is as follows. Binds and inhibits voltage-sensitive potassium channels. Inhibits the vertebrate potassium channel Kv1.1/KCNA1 with low affinity. This is Potassium channel toxin alpha-KTx 11.3 from Parabuthus granulatus (Granulated thick-tailed scorpion).